Reading from the N-terminus, the 261-residue chain is Indole-3-glycerol phosphate synthase (261 aa).

This sequence belongs to the TrpC family.

It carries out the reaction 1-(2-carboxyphenylamino)-1-deoxy-D-ribulose 5-phosphate + H(+) = (1S,2R)-1-C-(indol-3-yl)glycerol 3-phosphate + CO2 + H2O. It functions in the pathway amino-acid biosynthesis; L-tryptophan biosynthesis; L-tryptophan from chorismate: step 4/5. In Burkholderia pseudomallei (strain 1106a), this protein is Indole-3-glycerol phosphate synthase.